The following is a 317-amino-acid chain: Orange carotenoid-binding protein (317 aa).

An OCP N-terminal domain is found at 18 to 169; sequence ADVVPATIAR…DMGFDTSKLG (152 aa). 3'-hydroxyechinenone-binding residues include L37, Y203, and W290.

The protein belongs to the orange carotenoid-binding protein family. In terms of assembly, homodimer. 3'-hydroxyechinenone serves as cofactor. Proteolytically cleaved into a red 16.7 kDa form named red carotenoid-binding protein (RCP) which lacks 15 residues from the N-terminus and approximately 150 residues from the C-terminus.

It localises to the cellular thylakoid membrane. Its function is as follows. Acts as a blue-light photoreceptor and photo-protectant. Essential for inhibiting damaged induced by excess blue-green light via a process known as non-photochemical quenching (NPQ). Binding carotenoids improves OCP's intrinsic photoprotectant activity by broadening its absorption spectrum and facilitating the dissipation of absorbed energy. In the dark or dim light the stable inactive form (OCP-O) is orange, upon illumination with blue-green light it converts to a metastable active red form (OCP-R), inducing energy dissipation, quenching cellular fluorescence via NPQ. This chain is Orange carotenoid-binding protein, found in Limnospira maxima (Arthrospira maxima).